The chain runs to 99 residues: Small ribosomal subunit protein bS20 (99 aa).

This sequence belongs to the bacterial ribosomal protein bS20 family.

In terms of biological role, binds directly to 16S ribosomal RNA. In Synechococcus sp. (strain CC9311), this protein is Small ribosomal subunit protein bS20.